The primary structure comprises 124 residues: Kinocilin (124 aa).

The next 2 membrane-spanning stretches (helical) occupy residues L13–V33 and M40–L60. A disordered region spans residues P80–C124. Polar residues predominate over residues R90–R109. A compositionally biased stretch (basic and acidic residues) spans T110–C124.

The protein resides in the membrane. Its function is as follows. May play a role in stabilizing dense microtubular networks or in vesicular trafficking. This chain is Kinocilin (KNCN), found in Homo sapiens (Human).